Reading from the N-terminus, the 363-residue chain is MTIERVGLVVHGGREGAAEAAREVREWCDENAVACTDIDVWSDTGRHSAREEVDAAGDPDLVVTLGGDGTFLRGARLAAENDALILGVDLGRVGFLTEVPAPAVRSALDAVRDGGLEPESRMLLTLRASRLLEIPAEMEALLRYGRGPLLPPPRVRTDCESGDEWGIALNVTALNDVVLEKLSRDRQISVGVYIAGRLLASYSADALLVATPTGSTAYSFAAGGPVVSPRAEALVFTAVAPHMTFDRSVVTAPDEPVGLRILERSGRAAVSIDGQLRGVLDPGDWLGVYAAPRRLRAVRLGPMDFYGRLRERMRLTDAPAAVADGTPAPLWPVSTPPPGDLAHLALPVPGAEGASGDLLREQS.

Catalysis depends on aspartate 68, which acts as the Proton acceptor. Residues 68–69 (DG), arginine 73, 175–176 (ND), arginine 186, aspartate 205, alanine 240, and glutamine 275 contribute to the NAD(+) site.

The protein belongs to the NAD kinase family. A divalent metal cation is required as a cofactor.

It is found in the cytoplasm. The enzyme catalyses NAD(+) + ATP = ADP + NADP(+) + H(+). Its function is as follows. Involved in the regulation of the intracellular balance of NAD and NADP, and is a key enzyme in the biosynthesis of NADP. Catalyzes specifically the phosphorylation on 2'-hydroxyl of the adenosine moiety of NAD to yield NADP. The chain is NAD kinase 1 from Streptomyces coelicolor (strain ATCC BAA-471 / A3(2) / M145).